The sequence spans 713 residues: Cyclomaltodextrin glucanotransferase (713 aa).

An N-terminal signal peptide occupies residues 1–27; the sequence is MKRFMKLTAVWTLWLSLTLGLLSPVHA. The segment at 28-165 is A1; it reads APDTSVSNKQ…NIKVIIDFAP (138 aa). Positions 54, 56, 59, and 60 each coordinate Ca(2+). A disulfide bridge connects residues Cys-70 and Cys-77. Positions 78 and 80 each coordinate Ca(2+). A substrate-binding site is contributed by 127–128; it reads YW. Asn-166 contacts Ca(2+). Positions 166-229 are b; it reads NHTSPASSDD…NLYDLADLNH (64 aa). Substrate is bound at residue His-167. Residue Ile-217 participates in Ca(2+) binding. Substrate is bound at residue 220–223; sequence NLYD. Asp-226 provides a ligand contact to Ca(2+). Residues 230–433 are A2; that stretch reads NNSSVDVYLK…LRKSNPAIAY (204 aa). Arg-254 is a substrate binding site. Residue Asp-256 is the Nucleophile of the active site. 259 to 260 contacts substrate; sequence KH. His-260 is a binding site for Ca(2+). Glu-284 acts as the Proton donor in catalysis. Residues His-354, Asp-398, and Arg-402 each coordinate substrate. A c region spans residues 434 to 522; sequence GSTHERWINN…GTAVWQYTTD (89 aa). The d stretch occupies residues 523–609; the sequence is ATTPIIGNVG…SNIYDNFEVL (87 aa). Residues 526–607 enclose the IPT/TIG domain; sequence PIIGNVGPMM…AASNIYDNFE (82 aa). Residues 608-713 enclose the CBM20 domain; it reads VLTGDQVTVR…TATVNVNWQP (106 aa). The tract at residues 610 to 713 is e; that stretch reads TGDQVTVRFV…TATVNVNWQP (104 aa).

The protein belongs to the glycosyl hydrolase 13 family. As to quaternary structure, monomer. It depends on Ca(2+) as a cofactor.

It localises to the secreted. It catalyses the reaction Cyclizes part of a (1-&gt;4)-alpha-D-glucan chain by formation of a (1-&gt;4)-alpha-D-glucosidic bond.. The sequence is that of Cyclomaltodextrin glucanotransferase (cgt) from Bacillus sp. (strain 1011).